Here is a 334-residue protein sequence, read N- to C-terminus: Thioredoxin reductase aclT (334 aa).

Residues 16–19, 38–43, Ile-93, Ala-122, Asp-294, and 302–303 each bind FAD; these read GGPA, NASIDR, and TL.

It belongs to the class-II pyridine nucleotide-disulfide oxidoreductase family. In terms of assembly, homodimer. The cofactor is FAD.

The protein operates within mycotoxin biosynthesis. In terms of biological role, thioredoxin reductase; part of the gene cluster that mediates the biosynthesis of aspirochlorine (or antibiotic A30641), an unusual halogenated spiro compound with distinctive antifungal properties due to selective inhibition of protein biosynthesis, and which is also active against bacteria, viruses, and murine tumor cells. The non-ribosomal peptide synthetase (NRPS) aclP is responsible the formation of the diketopiperazine (DKP) core from the condensation of 2 phenylalanine residues. One Phe residue is tailored into chlorotyrosine by hydroxylation and chlorination, whereas the second Phe undergoes an unprecedented C-C bond cleavage to be converted into glycine. After formation of the DKP, sulfur is incorporated into the DKP by conjugation with glutathione by aclG, followed by its stepwise degradation to the thiol by aclI, aclJ and aclK, and the dithiol oxidation by aclT. In addition, oxygenases (aclB, aclC, aclL and aclO) and O-methyltransferases (aclM and aclU) act as tailoring enzymes to produce the intermediate dechloroaspirochlorine. Ultimately, chlorination of dechloroaspirochlorine by the halogenase aclH is the last step in the aspirochlorine pathway. This Aspergillus oryzae (strain ATCC 42149 / RIB 40) (Yellow koji mold) protein is Thioredoxin reductase aclT.